Consider the following 333-residue polypeptide: COMPASS-like H3K4 histone methylase component WDR5B (333 aa).

WD repeat units lie at residues 1-40, 41-80, 83-122, 126-167, 169-207, 211-252, 253-295, and 298-333; these read MPSG…KTLE, GHTA…LIHR, GHSS…ECLK, GHTN…RMIK, HSMP…CLKT, DKSP…KVYT, GHTN…ILQR, and GHTD…KQDA.

Unlike WDR5A, does not interact with RBL or TRO.

This Arabidopsis thaliana (Mouse-ear cress) protein is COMPASS-like H3K4 histone methylase component WDR5B.